The sequence spans 481 residues: MDLSNLTLTKIQELVLTRKCKIYDILLAYKNNYELNKDINGYIEFFDDSLEIAKRYDDCLKNCELEDLPLIGMLIAVKDNISIQDKSLTCASEILKGYISPYDATVIKRLKNKGAILIGRTNMDEFAMGSTCEFSYYGATLNPLNREYVIGGSSGGSAAVVAAFQAPFSLGSDTGGSVRLPASFSGILGFKPSYGGLSRYGLASYASSFDQIGFFSHSIEDIALILKHTCGSDKMDSTSVDIFDDFYPLKIESLQGKNLAVIKELSEDLMDKNVANSFAKFKLDLLSKGINIKEVSIEEINFILSIYYIISPVEASSNLARYTGLCYGKRISEGLSLNDFYFKHRSNFLSEEVKRRIVLGNYLLSERYDSKYYAKACEILQNLIIPKFNKLFESCDFIITPTSFVKPFRLGLDFDDPVKMYYSDICTVIANLIGAPAISLPYSKDEEGLSIGMQIIGRSKKDFELLSFSKNVIRELGLNGI.

Residues Lys-78 and Ser-153 each act as charge relay system in the active site. Residue Ser-177 is the Acyl-ester intermediate of the active site.

Belongs to the amidase family. GatA subfamily. In terms of assembly, heterotrimer of A, B and C subunits.

It carries out the reaction L-glutamyl-tRNA(Gln) + L-glutamine + ATP + H2O = L-glutaminyl-tRNA(Gln) + L-glutamate + ADP + phosphate + H(+). In terms of biological role, allows the formation of correctly charged Gln-tRNA(Gln) through the transamidation of misacylated Glu-tRNA(Gln) in organisms which lack glutaminyl-tRNA synthetase. The reaction takes place in the presence of glutamine and ATP through an activated gamma-phospho-Glu-tRNA(Gln). In Borreliella burgdorferi (strain ATCC 35210 / DSM 4680 / CIP 102532 / B31) (Borrelia burgdorferi), this protein is Glutamyl-tRNA(Gln) amidotransferase subunit A (gatA).